The following is a 529-amino-acid chain: Structure-specific endonuclease subunit SLX1 homolog 1 (529 aa).

The GIY-YIG domain maps to R4–Q89. The segment at C231–C364 adopts an SLX1-type zinc-finger fold. Disordered regions lie at residues V275–H305, N409–D437, and S470–D501. The segment covering R282–S297 has biased composition (basic and acidic residues).

The protein belongs to the SLX1 family. Forms a heterodimer with a member of the SLX4 family. The cofactor is a divalent metal cation.

Its subcellular location is the nucleus. Functionally, catalytic subunit of a heterodimeric structure-specific endonuclease that resolves DNA secondary structures generated during DNA repair and recombination. Has endonuclease activity towards branched DNA substrates, introducing single-strand cuts in duplex DNA close to junctions with ss-DNA. The polypeptide is Structure-specific endonuclease subunit SLX1 homolog 1 (Trypanosoma cruzi (strain CL Brener)).